The sequence spans 84 residues: Large ribosomal subunit protein bL31B (84 aa).

Belongs to the bacterial ribosomal protein bL31 family. Type B subfamily. In terms of assembly, part of the 50S ribosomal subunit.

The chain is Large ribosomal subunit protein bL31B from Bacteroides thetaiotaomicron (strain ATCC 29148 / DSM 2079 / JCM 5827 / CCUG 10774 / NCTC 10582 / VPI-5482 / E50).